A 147-amino-acid chain; its full sequence is Large ribosomal subunit protein uL15 (147 aa).

The disordered stretch occupies residues 1–54 (MKLFELQPAPGSKKLPNRKGRGIGSGNGKTGGRGHKGQNARAGGGVRPGFEGGQ). Composition is skewed to gly residues over residues 22–31 (GIGSGNGKTG) and 42–52 (AGGGVRPGFEG).

It belongs to the universal ribosomal protein uL15 family. In terms of assembly, part of the 50S ribosomal subunit.

In terms of biological role, binds to the 23S rRNA. The chain is Large ribosomal subunit protein uL15 from Ruminiclostridium cellulolyticum (strain ATCC 35319 / DSM 5812 / JCM 6584 / H10) (Clostridium cellulolyticum).